A 79-amino-acid polypeptide reads, in one-letter code: Beta-defensin 130 (79 aa).

Residues 1-22 (MKLHSLISVLLLFVTLIPKGKT) form the signal peptide. Cystine bridges form between Cys38–Cys53 and Cys43–Cys60.

Belongs to the beta-defensin family.

The protein localises to the secreted. Antimicrobial host-defense peptide. In Pan troglodytes (Chimpanzee), this protein is Beta-defensin 130.